Reading from the N-terminus, the 426-residue chain is Flotillin-1 (426 aa).

Belongs to the band 7/mec-2 family. Flotillin subfamily. As to quaternary structure, heterooligomeric complex of flotillins 1 and 2 and caveolins 1 and 2. In terms of tissue distribution, expressed in brain and ventral nerve cord from stage 12-16 of embryogenesis.

The protein localises to the cell membrane. Its subcellular location is the membrane. The protein resides in the caveola. May act as a scaffolding protein within caveolar membranes, functionally participating in formation of caveolae or caveolae-like vesicles. The sequence is that of Flotillin-1 from Drosophila melanogaster (Fruit fly).